A 3096-amino-acid chain; its full sequence is Unconventional myosin-XVB (3096 aa).

Disordered regions lie at residues 1–330 (MGRN…GPED), 389–489 (RPPE…GWGR), 508–540 (GGMP…ETPD), and 553–649 (AGRA…GPRL). The segment covering 19 to 33 (ASGEQESGSASADGA) has biased composition (low complexity). A compositionally biased stretch (basic and acidic residues) spans 34–50 (PSRERRSDRGQADRAKP). Residues 124-143 (RRRRKRKDKGPSARRGRRTP) are compositionally biased toward basic residues. 2 stretches are compositionally biased toward basic and acidic residues: residues 212-222 (DWPHADTRGRE) and 261-288 (TFED…RGAE). Over residues 307-330 (AVGQVPAAAGEGEAGAAAGAGPED) the composition is skewed to low complexity. Positions 406 to 416 (WGRRKPDEGRG) are enriched in basic and acidic residues. Residues 417–426 (HGRGSKGRGR) show a composition bias toward basic residues. Residues 427 to 489 (GKADEGRGHE…HQRGYEGWGR (63 aa)) are compositionally biased toward basic and acidic residues. The Myosin motor domain occupies 720-1394 (EDMEDLARLR…GWQRLEELRD (675 aa)). 818–825 (GHSGSGKT) serves as a coordination point for ATP. The segment at 1273–1295 (LEDLIARLGRSHVYFIQCLTPNP) is actin-binding. One can recognise an IQ domain in the interval 1414-1443 (RQRVLPRMQARMRGFQARKRYLRRRAALGQ). Positions 1551-1702 (RPGQPLAKPL…PTQLEWLAGW (152 aa)) constitute a MyTH4 1 domain. Disordered regions lie at residues 1802–1833 (PGIQ…VQRS), 1963–2026 (MQQR…PKSF), and 2040–2262 (QITV…LPED). The segment covering 1808-1820 (SLPPGPPPGPAPT) has biased composition (pro residues). The span at 1963–1980 (MQQRQQQARASEAASQAS) shows a compositional bias: low complexity. Acidic residues predominate over residues 2059–2076 (AQEEEEEEEEEEEQEEQE). Basic and acidic residues predominate over residues 2102 to 2116 (APKEAEAEPAKETAA). Over residues 2159–2170 (GPVPVPVQPSRP) the composition is skewed to pro residues. Positions 2176–2185 (RKIDPKDEAL) are enriched in basic and acidic residues. 2 stretches are compositionally biased toward pro residues: residues 2199-2217 (MLSP…PRPK) and 2247-2261 (HTPP…PLPE). Residues 2481–2542 (KDSGYVIALR…PADIVQPAAA (62 aa)) enclose the SH3 domain. Residues 2548-2567 (SKEQRSGWHKGQLSNGEPGL) form a disordered region. The MyTH4 2 domain occupies 2643–2789 (YTKAPIQESL…PPPGEMKAFL (147 aa)). Positions 2795-3096 (RLLLIHLPGG…ASCTEWPSIN (302 aa)) constitute an FERM domain.

This sequence belongs to the TRAFAC class myosin-kinesin ATPase superfamily. Myosin family. In terms of tissue distribution, detected in brain, stomach and kidney.

The protein localises to the cytoplasm. This chain is Unconventional myosin-XVB, found in Homo sapiens (Human).